The chain runs to 239 residues: tRNA (guanine-N(7)-)-methyltransferase (239 aa).

Residues E69, E94, D121, and D144 each coordinate S-adenosyl-L-methionine. D144 is a catalytic residue. K148 provides a ligand contact to substrate. The segment at 150–155 is interaction with RNA; the sequence is RHNKRR. Residues D180 and 217–220 each bind substrate; that span reads TKFE.

It belongs to the class I-like SAM-binding methyltransferase superfamily. TrmB family. As to quaternary structure, monomer.

It catalyses the reaction guanosine(46) in tRNA + S-adenosyl-L-methionine = N(7)-methylguanosine(46) in tRNA + S-adenosyl-L-homocysteine. It functions in the pathway tRNA modification; N(7)-methylguanine-tRNA biosynthesis. Its function is as follows. Catalyzes the formation of N(7)-methylguanine at position 46 (m7G46) in tRNA. In Escherichia coli O6:K15:H31 (strain 536 / UPEC), this protein is tRNA (guanine-N(7)-)-methyltransferase.